Reading from the N-terminus, the 192-residue chain is Peptidyl-tRNA hydrolase (192 aa).

Residue tyrosine 14 coordinates tRNA. Histidine 19 functions as the Proton acceptor in the catalytic mechanism. TRNA contacts are provided by tyrosine 64, asparagine 66, and asparagine 112.

This sequence belongs to the PTH family. In terms of assembly, monomer.

Its subcellular location is the cytoplasm. The enzyme catalyses an N-acyl-L-alpha-aminoacyl-tRNA + H2O = an N-acyl-L-amino acid + a tRNA + H(+). In terms of biological role, hydrolyzes ribosome-free peptidyl-tRNAs (with 1 or more amino acids incorporated), which drop off the ribosome during protein synthesis, or as a result of ribosome stalling. Catalyzes the release of premature peptidyl moieties from peptidyl-tRNA molecules trapped in stalled 50S ribosomal subunits, and thus maintains levels of free tRNAs and 50S ribosomes. The sequence is that of Peptidyl-tRNA hydrolase from Prosthecochloris aestuarii (strain DSM 271 / SK 413).